The sequence spans 234 residues: (5-formylfuran-3-yl)methyl phosphate synthase (234 aa).

Lysine 27 (schiff-base intermediate with substrate) is an active-site residue. Catalysis depends on lysine 85, which acts as the Proton acceptor.

This sequence belongs to the MfnB family.

It carries out the reaction 2 D-glyceraldehyde 3-phosphate = 4-(hydroxymethyl)-2-furancarboxaldehyde phosphate + phosphate + 2 H2O. It participates in cofactor biosynthesis; methanofuran biosynthesis. Catalyzes the formation of 4-(hydroxymethyl)-2-furancarboxaldehyde phosphate (4-HFC-P) from two molecules of glyceraldehyde-3-P (GA-3-P). This chain is (5-formylfuran-3-yl)methyl phosphate synthase, found in Methanosarcina mazei (strain ATCC BAA-159 / DSM 3647 / Goe1 / Go1 / JCM 11833 / OCM 88) (Methanosarcina frisia).